Consider the following 511-residue polypeptide: N-acetylgalactosamine-6-O-sulfatase (511 aa).

At Ser83 the chain carries 3-oxoalanine (Ser).

It belongs to the sulfatase family. The conversion to 3-oxoalanine (also known as C-formylglycine, FGly), of a serine or cysteine residue in prokaryotes and of a cysteine residue in eukaryotes, is critical for catalytic activity.

Exosulfatase involved in the degradation of the glycosaminoglycans (GAGs) chondroitin sulfate (CS) and dermatan sulfate (DS). Catalyzes the hydrolysis of the 6-sulfate groups of the N-acetyl-D-galactosamine 6-sulfate units. GAG-specific sulfatases play a key role in the persistence of the major human gut symbiont B.thetaiotaomicron in the host gastrointestinal tract. This is N-acetylgalactosamine-6-O-sulfatase from Bacteroides thetaiotaomicron (strain ATCC 29148 / DSM 2079 / JCM 5827 / CCUG 10774 / NCTC 10582 / VPI-5482 / E50).